Consider the following 84-residue polypeptide: UPF0473 protein CLI_2624 (84 aa).

This sequence belongs to the UPF0473 family.

In Clostridium botulinum (strain Langeland / NCTC 10281 / Type F), this protein is UPF0473 protein CLI_2624.